Consider the following 439-residue polypeptide: Xylose isomerase (439 aa).

Active-site residues include His-100 and Asp-103. Mg(2+) is bound by residues Glu-231, Glu-267, His-270, Asp-295, Asp-306, Asp-308, and Asp-338.

Belongs to the xylose isomerase family. In terms of assembly, homotetramer. It depends on Mg(2+) as a cofactor.

The protein resides in the cytoplasm. The catalysed reaction is alpha-D-xylose = alpha-D-xylulofuranose. This is Xylose isomerase from Rhodopirellula baltica (strain DSM 10527 / NCIMB 13988 / SH1).